A 153-amino-acid chain; its full sequence is MTHDNKLQVEAIKRGTVIDHIPAQIGFKLLSLFKLTETDQRITIGLNLPSGEMGRKDLIKIENTFLSEDQVDQLALYAPQATVNRIDNYEVVGKSRPSLPERIDNVLVCPNSNCISHAEPVSSSFAVRKRANDIALKCKYCEKEFSHNVVLAN.

4 residues coordinate Zn(2+): C109, C114, C138, and C141.

This sequence belongs to the PyrI family. In terms of assembly, contains catalytic and regulatory chains. Requires Zn(2+) as cofactor.

Its function is as follows. Involved in allosteric regulation of aspartate carbamoyltransferase. The chain is Aspartate carbamoyltransferase regulatory chain from Escherichia coli (strain ATCC 8739 / DSM 1576 / NBRC 3972 / NCIMB 8545 / WDCM 00012 / Crooks).